Reading from the N-terminus, the 111-residue chain is Ig heavy chain V-III region HPC76 (111 aa).

One can recognise an Ig-like domain in the interval 1 to 110; sequence ESGGGLVQPG…WGQGTTLTVS (110 aa).

This Mus musculus (Mouse) protein is Ig heavy chain V-III region HPC76.